Here is a 360-residue protein sequence, read N- to C-terminus: Photosystem II protein D1 2 (360 aa).

Helical transmembrane passes span 29 to 46, 118 to 133, and 142 to 156; these read YIGW…SATI, HFLI…EWEF, and WICV…AATA. H118 lines the chlorophyll a pocket. Y126 contacts pheophytin a. The [CaMn4O5] cluster site is built by D170 and E189. A helical transmembrane segment spans residues 197-218; the sequence is LHMFGVAGVFGGSLFAAMHGSL. H198 contributes to the chlorophyll a binding site. Residues H215 and 264 to 265 contribute to the a quinone site; that span reads SF. H215 is a binding site for Fe cation. H272 lines the Fe cation pocket. Residues 274-288 form a helical membrane-spanning segment; that stretch reads FLAAWPVIGIWLTSL. Positions 332, 333, 342, and 344 each coordinate [CaMn4O5] cluster. The propeptide occupies 345-360; that stretch reads GTESAPVAFAAALGDG.

The protein belongs to the reaction center PufL/M/PsbA/D family. PSII is composed of 1 copy each of membrane proteins PsbA, PsbB, PsbC, PsbD, PsbE, PsbF, PsbH, PsbI, PsbJ, PsbK, PsbL, PsbM, PsbT, PsbX, Psb30/Ycf12, peripheral proteins PsbO, CyanoQ (PsbQ), PsbU, PsbV and a large number of cofactors. It forms dimeric complexes. The D1/D2 heterodimer binds P680, chlorophylls that are the primary electron donor of PSII, and subsequent electron acceptors. It shares a non-heme iron and each subunit binds pheophytin, quinone, additional chlorophylls, carotenoids and lipids. D1 provides most of the ligands for the Mn4-Ca-O5 cluster of the oxygen-evolving complex (OEC). There is also a Cl(-1) ion associated with D1 and D2, which is required for oxygen evolution. The PSII complex binds additional chlorophylls, carotenoids and specific lipids. serves as cofactor. Post-translationally, tyr-161 forms a radical intermediate that is referred to as redox-active TyrZ, YZ or Y-Z. In terms of processing, C-terminally processed by CtpA; processing is essential to allow assembly of the oxygen-evolving complex and thus photosynthetic growth.

It is found in the cell inner membrane. The enzyme catalyses 2 a plastoquinone + 4 hnu + 2 H2O = 2 a plastoquinol + O2. Its function is as follows. Photosystem II (PSII) is a light-driven water:plastoquinone oxidoreductase that uses light energy to abstract electrons from H(2)O, generating O(2) and a proton gradient subsequently used for ATP formation. It consists of a core antenna complex that captures photons, and an electron transfer chain that converts photonic excitation into a charge separation. The D1/D2 (PsbA/PsbD) reaction center heterodimer binds P680, the primary electron donor of PSII as well as several subsequent electron acceptors. This chain is Photosystem II protein D1 2, found in Gloeobacter violaceus (strain ATCC 29082 / PCC 7421).